The following is a 164-amino-acid chain: UPF0114 protein Avin_40830 (164 aa).

4 consecutive transmembrane segments (helical) span residues 15–35, 53–73, 103–125, and 136–156; these read LLAP…LKFF, LILV…LVMV, GSLK…LRVF, and LLWY…MSYL.

The protein belongs to the UPF0114 family.

The protein localises to the cell membrane. The protein is UPF0114 protein Avin_40830 of Azotobacter vinelandii (strain DJ / ATCC BAA-1303).